A 76-amino-acid polypeptide reads, in one-letter code: Putative defensin-like protein 121 (76 aa).

A signal peptide spans 1–26; sequence MTYKATILAIFMIILVLGIGTKETRG. 4 cysteine pairs are disulfide-bonded: Cys-30/Cys-74, Cys-39/Cys-59, Cys-44/Cys-68, and Cys-48/Cys-70.

Belongs to the DEFL family.

It localises to the secreted. This Arabidopsis thaliana (Mouse-ear cress) protein is Putative defensin-like protein 121 (LCR55).